The sequence spans 102 residues: Small ribosomal subunit protein uS10 (102 aa).

The protein belongs to the universal ribosomal protein uS10 family. As to quaternary structure, part of the 30S ribosomal subunit.

Its function is as follows. Involved in the binding of tRNA to the ribosomes. The chain is Small ribosomal subunit protein uS10 from Dehalococcoides mccartyi (strain ATCC BAA-2266 / KCTC 15142 / 195) (Dehalococcoides ethenogenes (strain 195)).